The sequence spans 31 residues: Cytochrome b6-f complex subunit 6 (31 aa).

Residues 3 to 23 (IITSYFGFLLTALTIASALFI) form a helical membrane-spanning segment.

Belongs to the PetL family. As to quaternary structure, the 4 large subunits of the cytochrome b6-f complex are cytochrome b6, subunit IV (17 kDa polypeptide, PetD), cytochrome f and the Rieske protein, while the 4 small subunits are PetG, PetL, PetM and PetN. The complex functions as a dimer.

It is found in the plastid. It localises to the chloroplast thylakoid membrane. Functionally, component of the cytochrome b6-f complex, which mediates electron transfer between photosystem II (PSII) and photosystem I (PSI), cyclic electron flow around PSI, and state transitions. PetL is important for photoautotrophic growth as well as for electron transfer efficiency and stability of the cytochrome b6-f complex. The polypeptide is Cytochrome b6-f complex subunit 6 (Helianthus annuus (Common sunflower)).